Here is a 308-residue protein sequence, read N- to C-terminus: Coenzyme PQQ synthesis protein B (308 aa).

Belongs to the PqqB family.

The protein operates within cofactor biosynthesis; pyrroloquinoline quinone biosynthesis. May be involved in the transport of PQQ or its precursor to the periplasm. In Rhodopseudomonas palustris (strain TIE-1), this protein is Coenzyme PQQ synthesis protein B.